The following is a 338-amino-acid chain: D-alanine--D-alanine ligase (338 aa).

The ATP-grasp domain maps to 120–324 (KRVMLAEGLP…YEDLCIEVLK (205 aa)). Position 150-205 (150-205 (PDKLGLPLIVKPAREGSSIGLTKVTERAGMADAVAQAEKLDADILCEQFISGDEVT)) interacts with ATP. Mg(2+) is bound by residues Asp-277, Glu-291, and Asn-293.

This sequence belongs to the D-alanine--D-alanine ligase family. Mg(2+) serves as cofactor. Requires Mn(2+) as cofactor.

The protein resides in the cytoplasm. The enzyme catalyses 2 D-alanine + ATP = D-alanyl-D-alanine + ADP + phosphate + H(+). It functions in the pathway cell wall biogenesis; peptidoglycan biosynthesis. Functionally, cell wall formation. The protein is D-alanine--D-alanine ligase of Polaromonas sp. (strain JS666 / ATCC BAA-500).